The following is a 425-amino-acid chain: Serine--tRNA ligase (425 aa).

230–232 (TGE) is a binding site for L-serine. Residue 261–263 (RKE) participates in ATP binding. Glu-284 is an L-serine binding site. ATP is bound at residue 348–351 (EISS). Ser-385 contributes to the L-serine binding site.

Belongs to the class-II aminoacyl-tRNA synthetase family. Type-1 seryl-tRNA synthetase subfamily. As to quaternary structure, homodimer. The tRNA molecule binds across the dimer.

The protein localises to the cytoplasm. It catalyses the reaction tRNA(Ser) + L-serine + ATP = L-seryl-tRNA(Ser) + AMP + diphosphate + H(+). The enzyme catalyses tRNA(Sec) + L-serine + ATP = L-seryl-tRNA(Sec) + AMP + diphosphate + H(+). The protein operates within aminoacyl-tRNA biosynthesis; selenocysteinyl-tRNA(Sec) biosynthesis; L-seryl-tRNA(Sec) from L-serine and tRNA(Sec): step 1/1. Catalyzes the attachment of serine to tRNA(Ser). Is also able to aminoacylate tRNA(Sec) with serine, to form the misacylated tRNA L-seryl-tRNA(Sec), which will be further converted into selenocysteinyl-tRNA(Sec). This chain is Serine--tRNA ligase, found in Wolbachia sp. subsp. Brugia malayi (strain TRS).